A 379-amino-acid polypeptide reads, in one-letter code: MTSETSVNLLDFDAEGLVAYCGSLGEKPFRAKQLQRWIHQYNAGDFDGMTDLAKSLREKLKGRATIGMPEIASDHVSADGTRKWLIDVGNGNAVETVFIPEETRGTLCVSSQAGCAVNCRFCSTGKQGFSRNLSTAEIIGQLRMAEFALRASLGRAPGPNGKAERVVTNVVMMGMGEPLLNYNAVVPAMRLMLDDNAYGLSRRRVTLSTSGVVPMMDRLGAELPVALAVSLHAPNDALRDELVPLNKKHPLRELMAACQRYLKVAPRDFITFEYCMLDGVNDTEAHARELLAVTRDVPCKFNLIPFNPFPESGLIRSKPEQIKRFAQVLIDAGVVTTVRKTRGDDIDAACGQLAGAVKDRTRLAERTGTAAKIIEVRAV.

Glutamate 95 serves as the catalytic Proton acceptor. Positions 101-345 (EETRGTLCVS…TTVRKTRGDD (245 aa)) constitute a Radical SAM core domain. A disulfide bond links cysteine 108 and cysteine 350. Residues cysteine 115, cysteine 119, and cysteine 122 each contribute to the [4Fe-4S] cluster site. Residues 176–177 (GE), serine 208, 230–232 (SLH), and asparagine 307 contribute to the S-adenosyl-L-methionine site. Cysteine 350 acts as the S-methylcysteine intermediate in catalysis.

It belongs to the radical SAM superfamily. RlmN family. Requires [4Fe-4S] cluster as cofactor.

The protein resides in the cytoplasm. It carries out the reaction adenosine(2503) in 23S rRNA + 2 reduced [2Fe-2S]-[ferredoxin] + 2 S-adenosyl-L-methionine = 2-methyladenosine(2503) in 23S rRNA + 5'-deoxyadenosine + L-methionine + 2 oxidized [2Fe-2S]-[ferredoxin] + S-adenosyl-L-homocysteine. It catalyses the reaction adenosine(37) in tRNA + 2 reduced [2Fe-2S]-[ferredoxin] + 2 S-adenosyl-L-methionine = 2-methyladenosine(37) in tRNA + 5'-deoxyadenosine + L-methionine + 2 oxidized [2Fe-2S]-[ferredoxin] + S-adenosyl-L-homocysteine. Its function is as follows. Specifically methylates position 2 of adenine 2503 in 23S rRNA and position 2 of adenine 37 in tRNAs. m2A2503 modification seems to play a crucial role in the proofreading step occurring at the peptidyl transferase center and thus would serve to optimize ribosomal fidelity. In Burkholderia vietnamiensis (strain G4 / LMG 22486) (Burkholderia cepacia (strain R1808)), this protein is Dual-specificity RNA methyltransferase RlmN.